The following is a 1136-amino-acid chain: Type I inositol polyphosphate 5-phosphatase 13 (1136 aa).

WD repeat units lie at residues 147 to 185, 205 to 244, 259 to 297, 436 to 475, and 515 to 552; these read ETQT…EAGC, VTTS…VSHD, AHRG…KSLL, EDTR…RDVN, and SHNE…PLDN. Catalytic stretches follow at residues 782-798 and 861-876; these read DMVA…FGIT and KKRI…YRDT. Residue Lys940 forms a Glycyl lysine isopeptide (Lys-Gly) (interchain with G-Cter in ubiquitin) linkage. The tract at residues 1104–1136 is disordered; sequence KNLGGSRRYPTDITRNGSTRPRTEDSVRRGKSR. Residues 1124-1136 are compositionally biased toward basic and acidic residues; sequence PRTEDSVRRGKSR.

It belongs to the inositol polyphosphate 5-phosphatase family. As to quaternary structure, interacts with KIN10, but not with PHOT1. Mg(2+) is required as a cofactor. Expressed in young seedlings and flowers. Highly expressed in anther and pollen grains, but not in pistils. Not detected in maturated roots, stems and rosette leaves.

It is found in the nucleus. The enzyme catalyses 1D-myo-inositol 1,4,5-trisphosphate + H2O = 1D-myo-inositol 1,4-bisphosphate + phosphate. Its function is as follows. Converts inositol 1,4,5-trisphosphate (Ins(1,4,5)P3) to inositol 1,4-bisphosphate. Modulates cotyledon vein development through regulating auxin homeostasis. Involved in blue light responses. Decreases the amount of KIN10 degraded by the proteasome under low nutrient conditions. Participates with IP5P12 in the control of Ins(1,4,5)P3/Ca(2+) levels that is crucial for maintaining pollen dormancy and regulating early germination of pollen. May modulate auxin transport by regulating vesicle trafficking and thereby plays a role in root gravitropism. The chain is Type I inositol polyphosphate 5-phosphatase 13 from Arabidopsis thaliana (Mouse-ear cress).